The following is a 524-amino-acid chain: Coatomer subunit delta-1 (524 aa).

The interval 215–244 (MDMDSFASKPKGGRPSAAATAPGKGLGMKL) is disordered. The MHD domain occupies 283–524 (SDPVTVTIEE…RLVAANYQVV (242 aa)).

Belongs to the adaptor complexes medium subunit family. Delta-COP subfamily. In terms of assembly, oligomeric complex that consists of at least the alpha, beta, beta', gamma, delta, epsilon and zeta subunits.

The protein localises to the cytoplasm. It localises to the golgi apparatus membrane. Its subcellular location is the cytoplasmic vesicle. It is found in the COPI-coated vesicle membrane. Its function is as follows. The coatomer is a cytosolic protein complex that binds to dilysine motifs and reversibly associates with Golgi non-clathrin-coated vesicles, which further mediate biosynthetic protein transport from the ER, via the Golgi up to the trans Golgi network. Coatomer complex is required for budding from Golgi membranes, and is essential for the retrograde Golgi-to-ER transport of dilysine-tagged proteins. This Oryza sativa subsp. japonica (Rice) protein is Coatomer subunit delta-1.